Here is a 491-residue protein sequence, read N- to C-terminus: Ketol-acid reductoisomerase (NADP(+)) (491 aa).

One can recognise a KARI N-terminal Rossmann domain in the interval 15–208 (AQLGKCRFMG…GGHRAGVLES (194 aa)). NADP(+) is bound by residues 45-48 (CGAQ), Arg-68, Arg-76, Ser-78, and 108-110 (DKQ). Residue His-132 is part of the active site. NADP(+) is bound at residue Gly-158. KARI C-terminal knotted domains lie at 209 to 344 (SFVA…TAPQ) and 345 to 484 (FEGK…MTDM). Residues Asp-217, Glu-221, Glu-389, and Glu-393 each contribute to the Mg(2+) site. Residue Ser-414 participates in substrate binding.

It belongs to the ketol-acid reductoisomerase family. It depends on Mg(2+) as a cofactor.

It catalyses the reaction (2R)-2,3-dihydroxy-3-methylbutanoate + NADP(+) = (2S)-2-acetolactate + NADPH + H(+). The catalysed reaction is (2R,3R)-2,3-dihydroxy-3-methylpentanoate + NADP(+) = (S)-2-ethyl-2-hydroxy-3-oxobutanoate + NADPH + H(+). Its pathway is amino-acid biosynthesis; L-isoleucine biosynthesis; L-isoleucine from 2-oxobutanoate: step 2/4. The protein operates within amino-acid biosynthesis; L-valine biosynthesis; L-valine from pyruvate: step 2/4. Functionally, involved in the biosynthesis of branched-chain amino acids (BCAA). Catalyzes an alkyl-migration followed by a ketol-acid reduction of (S)-2-acetolactate (S2AL) to yield (R)-2,3-dihydroxy-isovalerate. In the isomerase reaction, S2AL is rearranged via a Mg-dependent methyl migration to produce 3-hydroxy-3-methyl-2-ketobutyrate (HMKB). In the reductase reaction, this 2-ketoacid undergoes a metal-dependent reduction by NADPH to yield (R)-2,3-dihydroxy-isovalerate. The protein is Ketol-acid reductoisomerase (NADP(+)) of Salmonella dublin (strain CT_02021853).